Here is a 32-residue protein sequence, read N- to C-terminus: MSDIN-like toxin proprotein 2 (32 aa).

The propeptide occupies 1-10 (MSDINATRVP). The cyclopeptide (Ala-Pro) cross-link spans 11 to 17 (AWLAECP). Positions 18–32 (CVGDDISHLLTRGEK) are excised as a propeptide.

It belongs to the MSDIN fungal toxin family. Post-translationally, processed by the macrocyclase-peptidase enzyme POPB to yield a toxic cyclic heptapeptide. POPB first removes 10 residues from the N-terminus. Conformational trapping of the remaining peptide forces the enzyme to release this intermediate rather than proceed to macrocyclization. The enzyme rebinds the remaining peptide in a different conformation and catalyzes macrocyclization of the N-terminal 7 residues.

Functionally, probable toxin that belongs to the MSDIN-like toxin family responsible for a large number of food poisoning cases and deaths. This chain is MSDIN-like toxin proprotein 2, found in Amanita rimosa.